The primary structure comprises 274 residues: MPFRSNNPITRDELLSRFFPQFHPVTTFNSGLSGGSFLIEHQGQRFVVRQPHDPDAPQSAFLHQYRALSQLPACIAPKPHLYLRDWMVVDYLPGEVKTYLPDTNELAGLLYYLHQQPRFGWRITLLPLLELYWQQSDPARRTVGWLRMLKRLRKAREPRPLRLSPLHMDVHAGNLVHSASGLKLIDWEYAGDGDIALELAAVWVENTEQHRQLVNDYATRAKIYPAQLWRQVRRWFPWLLMLKAGWFEYRWRQTGDQQFIRLADDTWRQLLIKQ.

Belongs to the thiamine kinase family.

It catalyses the reaction thiamine + ATP = thiamine phosphate + ADP + H(+). It functions in the pathway cofactor biosynthesis; thiamine diphosphate biosynthesis; thiamine phosphate from thiamine: step 1/1. In terms of biological role, catalyzes the ATP-dependent phosphorylation of thiamine to thiamine phosphate. Is involved in thiamine salvage. This Escherichia coli O157:H7 (strain EC4115 / EHEC) protein is Thiamine kinase.